The following is a 397-amino-acid chain: Elongation factor Tu (397 aa).

The 197-residue stretch at 10–206 (KPHVNIGTIG…AVDESIPEPQ (197 aa)) folds into the tr-type G domain. The G1 stretch occupies residues 19–26 (GHIDHGKT). 19 to 26 (GHIDHGKT) is a GTP binding site. Residue T26 participates in Mg(2+) binding. The interval 62-66 (GITIS) is G2. Residues 83-86 (DCPG) are G3. GTP is bound by residues 83–87 (DCPGH) and 138–141 (NKAD). The tract at residues 138–141 (NKAD) is G4. The tract at residues 176 to 178 (SAL) is G5.

The protein belongs to the TRAFAC class translation factor GTPase superfamily. Classic translation factor GTPase family. EF-Tu/EF-1A subfamily. As to quaternary structure, monomer.

Its subcellular location is the cytoplasm. It catalyses the reaction GTP + H2O = GDP + phosphate + H(+). Its function is as follows. GTP hydrolase that promotes the GTP-dependent binding of aminoacyl-tRNA to the A-site of ribosomes during protein biosynthesis. This Frankia casuarinae (strain DSM 45818 / CECT 9043 / HFP020203 / CcI3) protein is Elongation factor Tu.